Consider the following 569-residue polypeptide: Glutamate--tRNA ligase (569 aa).

Residues 99–109 carry the 'HIGH' region motif; the sequence is PEPNGYPTLGH.

The protein belongs to the class-I aminoacyl-tRNA synthetase family. Glutamate--tRNA ligase type 2 subfamily.

The protein localises to the cytoplasm. It carries out the reaction tRNA(Glu) + L-glutamate + ATP = L-glutamyl-tRNA(Glu) + AMP + diphosphate. Catalyzes the attachment of glutamate to tRNA(Glu) in a two-step reaction: glutamate is first activated by ATP to form Glu-AMP and then transferred to the acceptor end of tRNA(Glu). This chain is Glutamate--tRNA ligase, found in Korarchaeum cryptofilum (strain OPF8).